We begin with the raw amino-acid sequence, 184 residues long: Protein Syd (184 aa).

Belongs to the Syd family.

It localises to the cell inner membrane. Functionally, interacts with the SecY protein in vivo. May bind preferentially to an uncomplexed state of SecY, thus functioning either as a chelating agent for excess SecY in the cell or as a regulatory factor that negatively controls the translocase function. The polypeptide is Protein Syd (Photorhabdus laumondii subsp. laumondii (strain DSM 15139 / CIP 105565 / TT01) (Photorhabdus luminescens subsp. laumondii)).